We begin with the raw amino-acid sequence, 429 residues long: Glutamate-1-semialdehyde 2,1-aminomutase 2 (429 aa).

Lysine 268 bears the N6-(pyridoxal phosphate)lysine mark.

The protein belongs to the class-III pyridoxal-phosphate-dependent aminotransferase family. HemL subfamily. As to quaternary structure, homodimer. Requires pyridoxal 5'-phosphate as cofactor.

It is found in the cytoplasm. It carries out the reaction (S)-4-amino-5-oxopentanoate = 5-aminolevulinate. It participates in porphyrin-containing compound metabolism; protoporphyrin-IX biosynthesis; 5-aminolevulinate from L-glutamyl-tRNA(Glu): step 2/2. This Bacillus anthracis (strain A0248) protein is Glutamate-1-semialdehyde 2,1-aminomutase 2.